A 622-amino-acid polypeptide reads, in one-letter code: Polypeptide N-acetylgalactosaminyltransferase 18 (622 aa).

Residues 1-12 are Cytoplasmic-facing; it reads MVCTRKTKTLVS. A helical; Signal-anchor for type II membrane protein transmembrane segment spans residues 13-35; it reads TCVILSGMTNIICLLYVGWVTNY. Over 36–622 the chain is Lumenal; it reads IASVYVRGQE…ITNVLRSLVS (587 aa). 5 disulfides stabilise this stretch: cysteine 144–cysteine 392, cysteine 383–cysteine 462, cysteine 497–cysteine 513, cysteine 545–cysteine 558, and cysteine 586–cysteine 606. A glycan (N-linked (GlcNAc...) asparagine) is linked at asparagine 146. The interval 153–267 is catalytic subdomain A; sequence LPEVSIVFIF…VGWAEPVLTR (115 aa). Residue aspartate 194 participates in substrate binding. A glycan (N-linked (GlcNAc...) asparagine) is linked at asparagine 195. Residues aspartate 251 and histidine 253 each coordinate Mn(2+). Asparagine 320 is a glycosylation site (N-linked (GlcNAc...) asparagine). The tract at residues 324–400 is catalytic subdomain B; it reads PIRSPALIGC…PCSRIAHIER (77 aa). A Mn(2+)-binding site is contributed by histidine 397. The substrate site is built by arginine 400 and tyrosine 405. Positions 484 to 614 constitute a Ricin B-type lectin domain; the sequence is AYGVLQNSLK…KCSGQHWTIT (131 aa).

It belongs to the glycosyltransferase 2 family. GalNAc-T subfamily. The cofactor is Mn(2+).

The protein resides in the golgi apparatus membrane. It catalyses the reaction L-seryl-[protein] + UDP-N-acetyl-alpha-D-galactosamine = a 3-O-[N-acetyl-alpha-D-galactosaminyl]-L-seryl-[protein] + UDP + H(+). The enzyme catalyses L-threonyl-[protein] + UDP-N-acetyl-alpha-D-galactosamine = a 3-O-[N-acetyl-alpha-D-galactosaminyl]-L-threonyl-[protein] + UDP + H(+). It functions in the pathway protein modification; protein glycosylation. Its function is as follows. Catalyzes the initial reaction in O-linked oligosaccharide biosynthesis, the transfer of an N-acetyl-D-galactosamine (GalNAc) residue from UDP-GalNAc to a serine or threonine residue on the protein receptor. The polypeptide is Polypeptide N-acetylgalactosaminyltransferase 18 (Galnt18) (Mus musculus (Mouse)).